A 302-amino-acid chain; its full sequence is m7GpppN-mRNA hydrolase NUDT17 (302 aa).

One can recognise a Nudix hydrolase domain in the interval 89-237 (GRGVDLGVAV…DGTETPKHLP (149 aa)). The short motif at 128-149 (GHVEPDEELLDGGLRELWEESG) is the Nudix box element. E143 and E147 together coordinate Mg(2+).

It belongs to the Nudix hydrolase family. Mg(2+) is required as a cofactor. It depends on Mn(2+) as a cofactor.

It carries out the reaction a 5'-end (N(7)-methyl 5'-triphosphoguanosine)-ribonucleoside in mRNA + H2O = N(7)-methyl-GDP + a 5'-end phospho-ribonucleoside in mRNA + 2 H(+). Acts as a decapping enzyme capable of hydrolyzing monomethylated capped RNAs (in vitro). Hydrolyzes monomethylated capped RNA after alpha and beta phosphates to form N(7)-methyl-GDP. Shows low activity towards unmethylated capped RNA. This Bos taurus (Bovine) protein is m7GpppN-mRNA hydrolase NUDT17 (NUDT17).